The primary structure comprises 637 residues: Probable serine/threonine-protein kinase DDB_G0283065 (637 aa).

Disordered stretches follow at residues 36–88 (NNNN…KFNR) and 155–234 (NSNN…RFNN). Low complexity predominate over residues 53–85 (NNSTTKSIDNNNNNTNNSNSNNNNNDNIKNNNK). Positions 236-629 (FNDVRVLGKG…NQISTDYDNF (394 aa)) constitute a Protein kinase domain. ATP contacts are provided by residues 242 to 250 (LGKGGFGIV) and K265. D479 acts as the Proton acceptor in catalysis.

It belongs to the protein kinase superfamily. Ser/Thr protein kinase family. GCN2 subfamily.

The catalysed reaction is L-seryl-[protein] + ATP = O-phospho-L-seryl-[protein] + ADP + H(+). It carries out the reaction L-threonyl-[protein] + ATP = O-phospho-L-threonyl-[protein] + ADP + H(+). In Dictyostelium discoideum (Social amoeba), this protein is Probable serine/threonine-protein kinase DDB_G0283065.